The sequence spans 365 residues: uncharacterized protein (365 aa).

31–38 (GPINSGKT) serves as a coordination point for ATP.

Belongs to the archaeal ATPase family.

This is an uncharacterized protein from Methanocaldococcus jannaschii (strain ATCC 43067 / DSM 2661 / JAL-1 / JCM 10045 / NBRC 100440) (Methanococcus jannaschii).